Reading from the N-terminus, the 675-residue chain is Calcium channel YVC1 (675 aa).

A run of 8 helical transmembrane segments spans residues 244 to 264 (ILEI…VNTH), 271 to 291 (IDFF…DEFI), 301 to 321 (LGFW…AVCF), 355 to 375 (LLLF…LKTM), 380 to 400 (ILFF…FIGL), 440 to 460 (VLYY…LIAL), 495 to 515 (LYVP…WFVS), and 518 to 538 (TWKN…LAYI). Positions 644-675 (YEVIEKIDKLTNLLEVVVAENKELKKRLENKA) form a coiled coil.

It belongs to the transient receptor (TC 1.A.4) family.

The protein resides in the vacuole membrane. Its function is as follows. Vacuolar calcium channel involved in the release of calcium ions from the vacuole in response to hyperosmotic or alkaline stress. Required for activation of CAP1-related transcription of oxidative stress response (OSR) genes, but also for maintaining the stability of both the mitochondria and the vacuole in a potassium- and calcium-dependent manner. Contributes to pathogenicity. Plays a key role in hyphal polarized growth and re-orientation to host-signals through its contribution to the localization of the Spitzenkoerper to the hyphal tips. This Candida albicans (strain SC5314 / ATCC MYA-2876) (Yeast) protein is Calcium channel YVC1 (YVC1).